The primary structure comprises 450 residues: MLDNFIANQATKEFSVSEISNKIKELLENNFGYIKVKGEISGLKIASSGHAYFNLKENTAILACTCWRPILAKIKFPLNDGMEVVISGKLSSYAGNSRYQLSVDNLQPAGLGAMLQILNERKARLEKEGLFNKIRIPIPFLPDKIGVITSITGAVIKDIIHRIRERFPTRIIIWPVSVQGENSGNEIAEAIEGFNNLEEINKPSVIIVARGGGSIEDLWSFNDEILVRAAYNSKIPIISAVGHEVDYTLIDLAADKRAPTPTAAAEFAVPVRSILNNTLQSYEKILLNNTSRLIKYHEQNIINYDKIHRYLSHYMNNKQQLLDETGFNLLDALPCFIELQETKIKSFSKERVNPAKILNYKTLELTHQTAYLSKSANNTLKNFEYKLELNSTLLASLDYNNVLKRGFAIVKGETGNFLSSKITAANEKIFNIKFSDGEIKVVRNTVIASD.

The protein belongs to the XseA family. In terms of assembly, heterooligomer composed of large and small subunits.

It localises to the cytoplasm. The catalysed reaction is Exonucleolytic cleavage in either 5'- to 3'- or 3'- to 5'-direction to yield nucleoside 5'-phosphates.. Bidirectionally degrades single-stranded DNA into large acid-insoluble oligonucleotides, which are then degraded further into small acid-soluble oligonucleotides. This Rickettsia felis (strain ATCC VR-1525 / URRWXCal2) (Rickettsia azadi) protein is Exodeoxyribonuclease 7 large subunit.